The primary structure comprises 281 residues: Urease accessory protein UreD 2 (281 aa).

This sequence belongs to the UreD family. UreD, UreF and UreG form a complex that acts as a GTP-hydrolysis-dependent molecular chaperone, activating the urease apoprotein by helping to assemble the nickel containing metallocenter of UreC. The UreE protein probably delivers the nickel.

It localises to the cytoplasm. Required for maturation of urease via the functional incorporation of the urease nickel metallocenter. The polypeptide is Urease accessory protein UreD 2 (Pseudomonas syringae pv. syringae (strain B728a)).